The chain runs to 100 residues: Large ribosomal subunit protein uL23 (100 aa).

The protein belongs to the universal ribosomal protein uL23 family. As to quaternary structure, part of the 50S ribosomal subunit. Contacts protein L29, and trigger factor when it is bound to the ribosome.

Functionally, one of the early assembly proteins it binds 23S rRNA. One of the proteins that surrounds the polypeptide exit tunnel on the outside of the ribosome. Forms the main docking site for trigger factor binding to the ribosome. This Prochlorococcus marinus (strain MIT 9515) protein is Large ribosomal subunit protein uL23.